Here is a 410-residue protein sequence, read N- to C-terminus: 2-oxoisovalerate dehydrogenase subunit alpha (410 aa).

This sequence belongs to the BCKDHA family. In terms of assembly, heterodimer of an alpha and a beta chain. Thiamine diphosphate serves as cofactor.

The enzyme catalyses N(6)-[(R)-lipoyl]-L-lysyl-[protein] + 3-methyl-2-oxobutanoate + H(+) = N(6)-[(R)-S(8)-2-methylpropanoyldihydrolipoyl]-L-lysyl-[protein] + CO2. Its function is as follows. The branched-chain alpha-keto dehydrogenase complex catalyzes the overall conversion of alpha-keto acids to acyl-CoA and CO(2). It contains multiple copies of three enzymatic components: branched-chain alpha-keto acid decarboxylase (E1), lipoamide acyltransferase (E2) and lipoamide dehydrogenase (E3). This chain is 2-oxoisovalerate dehydrogenase subunit alpha (bkdA1), found in Pseudomonas putida (Arthrobacter siderocapsulatus).